Consider the following 985-residue polypeptide: Rho guanine nucleotide exchange factor 2 (985 aa).

Positions 1-32 are disordered; that stretch reads MSRIESLTRARIDRSKEQATKTREKEKMKEAK. The Phorbol-ester/DAG-type zinc-finger motif lies at 39–86; the sequence is GHLFTTISVSGMTMCYACNKSITAKEALICPTCNVTIHNRCKDTLANC. Residues S109, S122, S129, S133, and S137 each carry the phosphoserine modification. The segment at 131–161 is interaction with DYNLT1; the sequence is RQSLLGSRRGLSSLSLAKSVSTTNIAGHFND. S143 is modified (phosphoserine; by PAK4). 5 positions are modified to phosphoserine: S151, S163, S172, S174, and S177. The DH domain maps to 236-433; it reads KKQDVIYELI…KELLSNVDQD (198 aa). K354 carries the post-translational modification N6-acetyllysine. The region spanning 473-572 is the PH domain; the sequence is KLIHDGCLLW…WIRVIQQSVR (100 aa). A coiled-coil region spans residues 591–615; it reads LRRIKTKLQQKNQALVELLQMNVEL. 2 positions are modified to phosphoserine: S646 and S649. T680 is subject to Phosphothreonine; by MAPK1 or MAPK3. S692, S710, and S781 each carry phosphoserine. The residue at position 795 (T795) is a Phosphothreonine. The stretch at 797–866 forms a coiled coil; sequence EKQATELALL…RQLAALGQNE (70 aa). S885 bears the Phosphoserine mark. 2 disordered regions span residues 890 to 909 and 918 to 985; these read DALY…DRLD and HRPF…ASES. Y893 carries the phosphotyrosine modification. Phosphoserine; by PAK4 is present on S895. A compositionally biased stretch (basic and acidic residues) spans 919–938; the sequence is RPFDDREAQELGSPEDRLQD. Residues S931, S939, and S940 each carry the phosphoserine modification. A compositionally biased stretch (acidic residues) spans 940–949; that stretch reads SDPDTCSEEE. T944 is subject to Phosphothreonine. Residues S946, S951, S952, S955, and S959 each carry the phosphoserine modification.

In terms of assembly, found in a complex composed at least of ARHGEF2, NOD2 and RIPK2. Interacts with RIPK2; the interaction mediates tyrosine phosphorylation of RIPK2 by Src kinase CSK. Interacts with RIPK1 and RIPK3. Interacts with YWHAZ/14-3-3 zeta; when phosphorylated at Ser-885. Interacts with the kinases PAK4, AURKA and MAPK1. Interacts with RHOA and RAC1. Interacts with NOD1. Interacts (via the N- terminal zinc finger) with CAPN6 (via domain II). Interacts with DYNLT1. Phosphorylation of Ser-885 by PAK1 induces binding to protein YWHAZ, promoting its relocation to microtubules and the inhibition of its activity. Phosphorylated by AURKA and CDK1 during mitosis, which negatively regulates its activity. Phosphorylation by MAPK1 or MAPK3 increases nucleotide exchange activity. Phosphorylation by PAK4 releases GEF-H1 from the microtubules. Phosphorylated on serine, threonine and tyrosine residues in a RIPK2-dependent manner.

The protein resides in the cytoplasm. The protein localises to the cytoskeleton. It is found in the cell junction. It localises to the tight junction. Its subcellular location is the golgi apparatus. The protein resides in the spindle. The protein localises to the cytoplasmic vesicle. Functionally, activates Rho-GTPases by promoting the exchange of GDP for GTP. May be involved in epithelial barrier permeability, cell motility and polarization, dendritic spine morphology, antigen presentation, leukemic cell differentiation, cell cycle regulation, innate immune response, and cancer. Binds Rac-GTPases, but does not seem to promote nucleotide exchange activity toward Rac-GTPases. May stimulate instead the cortical activity of Rac. Inactive toward CDC42, TC10, or Ras-GTPases. Forms an intracellular sensing system along with NOD1 for the detection of microbial effectors during cell invasion by pathogens. Involved in innate immune signaling transduction pathway promoting cytokine IL6/interleukin-6 and TNF-alpha secretion in macrophage upon stimulation by bacterial peptidoglycans; acts as a signaling intermediate between NOD2 receptor and RIPK2 kinase. Contributes to the tyrosine phosphorylation of RIPK2 through Src tyrosine kinase leading to NF-kappaB activation by NOD2. Overexpression activates Rho-, but not Rac-GTPases, and increases paracellular permeability. Involved in neuronal progenitor cell division and differentiation. Involved in the migration of precerebellar neurons. The chain is Rho guanine nucleotide exchange factor 2 (Arhgef2) from Rattus norvegicus (Rat).